The primary structure comprises 224 residues: Glutathione S-transferase D7 (224 aa).

In terms of domain architecture, GST N-terminal spans 2–83 (PNLDLYNFPM…YLVEKYGKPD (82 aa)). Residues 53-55 (HTI) and 67-69 (ESR) contribute to the glutathione site. A GST C-terminal domain is found at 90 to 210 (DPQKRALINQ…LESLQQGKKF (121 aa)).

It belongs to the GST superfamily. Delta family. Homodimer.

It carries out the reaction RX + glutathione = an S-substituted glutathione + a halide anion + H(+). Functionally, conjugation of reduced glutathione to a wide number of exogenous and endogenous hydrophobic electrophiles. May be involved in detoxification. The chain is Glutathione S-transferase D7 from Drosophila melanogaster (Fruit fly).